A 77-amino-acid polypeptide reads, in one-letter code: Cold shock protein YdfK (77 aa).

The protein to E.coli YnaE.

This is Cold shock protein YdfK (ydfK) from Escherichia coli (strain K12).